The sequence spans 571 residues: Streptolysin O (571 aa).

An N-terminal signal peptide occupies residues 1–33; sequence MSNKKTFKKYSRVAGLLTVALIIGNLVTANAES. Disordered regions lie at residues 32–56 and 81–108; these read ESNK…ESSE and KEMP…HTEE. The span at 37-48 shows a compositional bias: low complexity; that stretch reads NTASTETTTTNE. 4 beta stranded membrane passes run 260-273, 280-289, 358-367, and 375-387; these read KSQI…NSKI, IDFKSISKGE, SNDVEAAFSA, and KTNG…LENS. The Conserved undecapeptide motif lies at 529–539; sequence ECTGLAWEWWR. Position 561 (Thr-561) is a short sequence motif, cholesterol binding.

It belongs to the cholesterol-dependent cytolysin family. Homooligomeric pore complex of 35 to 50 subunits; when inserted in the host membrane.

Its subcellular location is the secreted. The protein resides in the host cell membrane. Functionally, a cholesterol-dependent toxin that causes cytolysis by forming pores in cholesterol containing host membranes. After binding to target membranes, the protein undergoes a major conformation change, leading to its insertion in the host membrane and formation of an oligomeric pore complex. Cholesterol is required for binding to host membranes, membrane insertion and pore formation; cholesterol binding is mediated by a Thr-Leu pair in the C-terminus. Can be reversibly inactivated by oxidation. This chain is Streptolysin O (slo), found in Streptococcus pyogenes serotype M6 (strain ATCC BAA-946 / MGAS10394).